A 353-amino-acid chain; its full sequence is UDP-3-O-acylglucosamine N-acyltransferase (353 aa).

The active-site Proton acceptor is the His246.

This sequence belongs to the transferase hexapeptide repeat family. LpxD subfamily. In terms of assembly, homotrimer.

The enzyme catalyses a UDP-3-O-[(3R)-3-hydroxyacyl]-alpha-D-glucosamine + a (3R)-hydroxyacyl-[ACP] = a UDP-2-N,3-O-bis[(3R)-3-hydroxyacyl]-alpha-D-glucosamine + holo-[ACP] + H(+). The protein operates within bacterial outer membrane biogenesis; LPS lipid A biosynthesis. In terms of biological role, catalyzes the N-acylation of UDP-3-O-acylglucosamine using 3-hydroxyacyl-ACP as the acyl donor. Is involved in the biosynthesis of lipid A, a phosphorylated glycolipid that anchors the lipopolysaccharide to the outer membrane of the cell. This chain is UDP-3-O-acylglucosamine N-acyltransferase, found in Chlorobaculum tepidum (strain ATCC 49652 / DSM 12025 / NBRC 103806 / TLS) (Chlorobium tepidum).